An 816-amino-acid polypeptide reads, in one-letter code: Protein hunchback (816 aa).

4 disordered regions span residues 33–92, 129–151, 165–185, and 197–229; these read LSHH…QPMD, QQHF…GGFN, YYGG…PTAV, and ALTP…LMSN. Composition is skewed to low complexity over residues 49-60, 79-89, and 129-139; these read SNSNSGASSPRQ, QQQQQQQQQQQ, and QQHFQAAQHQQ. Threonine 199 carries the phosphothreonine modification. Phosphoserine occurs at positions 209, 228, 230, and 231. Over residues 219–229 the composition is skewed to basic and acidic residues; sequence EPEKEHDLMSN. 4 consecutive C2H2-type zinc fingers follow at residues 261–283, 290–312, 318–340, and 346–364; these read YKCK…TRTH, LQCA…IRKH, FQCD…RKSH, and YRCA…FKLH. Disordered stretches follow at residues 387-427, 536-612, and 679-734; these read VIDV…QQQQ, LQQQ…QLPH, and GSSA…SNPT. 2 stretches are compositionally biased toward low complexity: residues 399–427 and 536–560; these read SKSF…QQQQ and LQQQ…QQQQ. The span at 567 to 578 shows a compositional bias: acidic residues; that stretch reads NEEDEEEEEHED. Phosphoserine is present on residues serine 584 and serine 587. Over residues 712-734 the composition is skewed to low complexity; the sequence is SASSTASSSGNSSNASSSTSNPT. 2 C2H2-type zinc fingers span residues 763–785 and 791–815; these read YECK…MGYH and FKCN…RNAH.

Belongs to the hunchback C2H2-type zinc-finger protein family.

Its subcellular location is the nucleus. Functionally, gap class segmentation protein that controls development of head structures. This Drosophila virilis (Fruit fly) protein is Protein hunchback.